The following is a 175-amino-acid chain: Transcription factor E (175 aa).

Residues 3-88 (DNPLIQQVLF…TWKPSLEKLP (86 aa)) form the HTH TFE/IIEalpha-type domain.

It belongs to the TFE family. Monomer. Interaction with RNA polymerase subunits RpoF and RpoE is necessary for Tfe stimulatory transcription activity. Able to interact with Tbp and RNA polymerase in the absence of DNA promoter. Interacts both with the preinitiation and elongation complexes.

Transcription factor that plays a role in the activation of archaeal genes transcribed by RNA polymerase. Facilitates transcription initiation by enhancing TATA-box recognition by TATA-box-binding protein (Tbp), and transcription factor B (Tfb) and RNA polymerase recruitment. Not absolutely required for transcription in vitro, but particularly important in cases where Tbp or Tfb function is not optimal. It dynamically alters the nucleic acid-binding properties of RNA polymerases by stabilizing the initiation complex and destabilizing elongation complexes. Seems to translocate with the RNA polymerase following initiation and acts by binding to the non template strand of the transcription bubble in elongation complexes. This Methanococcus vannielii (strain ATCC 35089 / DSM 1224 / JCM 13029 / OCM 148 / SB) protein is Transcription factor E.